The chain runs to 499 residues: Serine carboxypeptidase 1 (499 aa).

Residues 1 to 30 (MARCRRRSGCTAGAALLLLLALALSGGGGA) form the signal peptide. Intrachain disulfides connect Cys-92–Cys-388, Cys-256–Cys-268, and Cys-291–Cys-355. Asn-148 carries N-linked (GlcNAc...) asparagine glycosylation. Residue Ser-188 is part of the active site. N-linked (GlcNAc...) asparagine glycosylation occurs at Asn-262. Residues 297 to 351 (IKEVNLQNSKLPQSFKDLGTTNKPFPVRTRMLGRAWPLRAPVKAGRVPSWQEVAS) constitute a propeptide, linker peptide. Residue Asn-407 is glycosylated (N-linked (GlcNAc...) asparagine). Active-site residues include Asp-423 and His-476. The Microbody targeting signal motif lies at 497-499 (SKL).

This sequence belongs to the peptidase S10 family. Carboxypeptidase I is a dimer, where each monomer is composed of two chains linked by disulfide bonds. Post-translationally, the linker peptide is endoproteolytically excised during enzyme maturation.

Its subcellular location is the secreted. It carries out the reaction Release of a C-terminal amino acid with broad specificity.. In terms of biological role, may be involved in the degradation of small peptides (2-5 residues) or in the degradation of storage proteins in the embryo. The protein is Serine carboxypeptidase 1 (CBP1) of Hordeum vulgare (Barley).